Here is a 240-residue protein sequence, read N- to C-terminus: UDP-2,3-diacylglucosamine hydrolase (240 aa).

Residues Asp-8, His-10, Asp-41, Asn-79, and His-114 each coordinate Mn(2+). 79 to 80 provides a ligand contact to substrate; it reads NR. Substrate contacts are provided by Asp-122, Ser-160, Asn-164, Lys-167, and His-195. Residues His-195 and His-197 each coordinate Mn(2+).

This sequence belongs to the LpxH family. Requires Mn(2+) as cofactor.

The protein localises to the cell inner membrane. It catalyses the reaction UDP-2-N,3-O-bis[(3R)-3-hydroxytetradecanoyl]-alpha-D-glucosamine + H2O = 2-N,3-O-bis[(3R)-3-hydroxytetradecanoyl]-alpha-D-glucosaminyl 1-phosphate + UMP + 2 H(+). It functions in the pathway glycolipid biosynthesis; lipid IV(A) biosynthesis; lipid IV(A) from (3R)-3-hydroxytetradecanoyl-[acyl-carrier-protein] and UDP-N-acetyl-alpha-D-glucosamine: step 4/6. Functionally, hydrolyzes the pyrophosphate bond of UDP-2,3-diacylglucosamine to yield 2,3-diacylglucosamine 1-phosphate (lipid X) and UMP by catalyzing the attack of water at the alpha-P atom. Involved in the biosynthesis of lipid A, a phosphorylated glycolipid that anchors the lipopolysaccharide to the outer membrane of the cell. This is UDP-2,3-diacylglucosamine hydrolase from Salmonella schwarzengrund (strain CVM19633).